A 657-amino-acid polypeptide reads, in one-letter code: Glycogen debranching enzyme (657 aa).

The active-site Nucleophile is D336. E371 acts as the Proton donor in catalysis. The tract at residues 460-479 is disordered; sequence ANGEENRDGTNNNYSNNHGK.

The protein belongs to the glycosyl hydrolase 13 family.

It catalyses the reaction Hydrolysis of (1-&gt;6)-alpha-D-glucosidic linkages to branches with degrees of polymerization of three or four glucose residues in limit dextrin.. It functions in the pathway glycan degradation; glycogen degradation. Functionally, removes maltotriose and maltotetraose chains that are attached by 1,6-alpha-linkage to the limit dextrin main chain, generating a debranched limit dextrin. This chain is Glycogen debranching enzyme, found in Escherichia coli O1:K1 / APEC.